The sequence spans 205 residues: uncharacterized protein (205 aa).

Residues 11-71 form the HTH tetR-type domain; that stretch reads KTRRALVDAA…EMVDEAGLML (61 aa).

This is an uncharacterized protein from Haemophilus influenzae (strain ATCC 51907 / DSM 11121 / KW20 / Rd).